The primary structure comprises 145 residues: 3-hydroxyacyl-[acyl-carrier-protein] dehydratase FabZ (145 aa).

His-49 is a catalytic residue.

The protein belongs to the thioester dehydratase family. FabZ subfamily.

The protein localises to the cytoplasm. It catalyses the reaction a (3R)-hydroxyacyl-[ACP] = a (2E)-enoyl-[ACP] + H2O. Functionally, involved in unsaturated fatty acids biosynthesis. Catalyzes the dehydration of short chain beta-hydroxyacyl-ACPs and long chain saturated and unsaturated beta-hydroxyacyl-ACPs. This Rickettsia peacockii (strain Rustic) protein is 3-hydroxyacyl-[acyl-carrier-protein] dehydratase FabZ.